An 82-amino-acid polypeptide reads, in one-letter code: Metallothionein-like protein 2A (82 aa).

This sequence belongs to the metallothionein superfamily. Type 15 family. Expressed in stems, leaves, rachis, inflorescences and seeds.

In terms of biological role, metallothioneins have a high content of cysteine residues that bind various heavy metals. The protein is Metallothionein-like protein 2A (MT2A) of Oryza sativa subsp. japonica (Rice).